The sequence spans 275 residues: Large ribosomal subunit protein uL2 (275 aa).

The disordered stretch occupies residues 224-275; sequence AMNPVDHPHGGGEAKAGQGNPHPVTPWGVPTKGYKTRKNKRTQQFIVRDRRG.

Belongs to the universal ribosomal protein uL2 family. Part of the 50S ribosomal subunit. Forms a bridge to the 30S subunit in the 70S ribosome.

Functionally, one of the primary rRNA binding proteins. Required for association of the 30S and 50S subunits to form the 70S ribosome, for tRNA binding and peptide bond formation. It has been suggested to have peptidyltransferase activity; this is somewhat controversial. Makes several contacts with the 16S rRNA in the 70S ribosome. The protein is Large ribosomal subunit protein uL2 of Xanthomonas oryzae pv. oryzae (strain MAFF 311018).